A 158-amino-acid chain; its full sequence is HTH-type transcriptional repressor NicR (158 aa).

Positions 20–152 (TEQVGHLLRK…ILYLLRKMID (133 aa)) constitute an HTH marR-type domain. Positions 66 to 89 (QAELIKATAVDQATIRGIVERLKA) form a DNA-binding region, H-T-H motif.

It functions in the pathway cofactor degradation; nicotinate degradation [regulation]. Transcriptional repressor for the nicCDEFTP and nicXR operons, encoding the lower aerobic nicotinate degradation pathway. Acts under non-induced conditions: repression of the nicCDEFTP and nicXR operons becomes alleviated in presence of 6-hydroxynicotinate (6HNA). In Pseudomonas putida (strain ATCC 47054 / DSM 6125 / CFBP 8728 / NCIMB 11950 / KT2440), this protein is HTH-type transcriptional repressor NicR (nicR).